The chain runs to 360 residues: Probable nuclear hormone receptor HR38 (360 aa).

The interval 1 to 21 is disordered; it reads GSSSPGVAPADNTGPRAAPSS. A DNA-binding region (nuclear receptor) is located at residues 23-98; sequence SQLCAVCGDT…VGMVKEVVRT (76 aa). NR C4-type zinc fingers lie at residues 26 to 46 and 62 to 86; these read CAVC…CEGC and CLAE…FQKC. An NR LBD domain is found at 122 to 357; sequence PPISLITALV…PLIENMFRAS (236 aa).

The protein belongs to the nuclear hormone receptor family. NR4 subfamily. As to quaternary structure, forms a heterodimer with USP.

It is found in the nucleus. The chain is Probable nuclear hormone receptor HR38 (HR38) from Bombyx mori (Silk moth).